Reading from the N-terminus, the 429-residue chain is Gamma-glutamyl phosphate reductase (429 aa).

It belongs to the gamma-glutamyl phosphate reductase family.

It is found in the cytoplasm. It carries out the reaction L-glutamate 5-semialdehyde + phosphate + NADP(+) = L-glutamyl 5-phosphate + NADPH + H(+). The protein operates within amino-acid biosynthesis; L-proline biosynthesis; L-glutamate 5-semialdehyde from L-glutamate: step 2/2. Its function is as follows. Catalyzes the NADPH-dependent reduction of L-glutamate 5-phosphate into L-glutamate 5-semialdehyde and phosphate. The product spontaneously undergoes cyclization to form 1-pyrroline-5-carboxylate. This is Gamma-glutamyl phosphate reductase from Bradyrhizobium sp. (strain ORS 278).